The following is a 307-amino-acid chain: Small ribosomal subunit protein uS3 (307 aa).

The KH type-2 domain maps to 17–86 (MDEYFAEQLN…NPQIDAQEVK (70 aa)). A compositionally biased stretch (basic and acidic residues) spans 201-226 (IEEPAEKPAEKQVEKPAVAPKKEAAK). Residues 201–265 (IEEPAEKPAE…QVEASEDFEE (65 aa)) form a disordered region. The span at 240-265 (PTEEPEVAEPEEAEEAQVEASEDFEE) shows a compositional bias: acidic residues.

It belongs to the universal ribosomal protein uS3 family. In terms of assembly, part of the 30S ribosomal subunit.

In terms of biological role, binds the lower part of the 30S subunit head. The polypeptide is Small ribosomal subunit protein uS3 (Methanosarcina mazei (strain ATCC BAA-159 / DSM 3647 / Goe1 / Go1 / JCM 11833 / OCM 88) (Methanosarcina frisia)).